The primary structure comprises 61 residues: Sperm protamine P1 (61 aa).

The segment at 1 to 61 (MARYRHSRSR…RRYSRRRRRY (61 aa)) is disordered.

The protein belongs to the protamine P1 family. In terms of tissue distribution, testis.

Its subcellular location is the nucleus. It is found in the chromosome. In terms of biological role, protamines substitute for histones in the chromatin of sperm during the haploid phase of spermatogenesis. They compact sperm DNA into a highly condensed, stable and inactive complex. This Macropus giganteus (Eastern gray kangaroo) protein is Sperm protamine P1 (PRM1).